We begin with the raw amino-acid sequence, 1451 residues long: Copper-transporting ATPase 2 (1451 aa).

At Met1–Ser646 the chain is on the cytoplasmic side. 3 consecutive HMA domains span residues Thr57–Ser123, Ala142–Ala208, and Ala256–Phe322. Residues Cys68, Cys71, Cys153, Cys156, Cys267, and Cys270 each contribute to the Cu(+) site. A disordered region spans residues Asp328–Pro353. Residues Gly335 to Ser345 show a composition bias toward low complexity. An HMA 4 domain is found at Arg355–Ser421. Ser469, Ser471, and Ser474 each carry phosphoserine. 2 HMA domains span residues Gln481–Ala547 and Gly557–Ser623. Residues Cys492, Cys495, Cys568, and Cys571 each contribute to the Cu(+) site. Residues Phe647–Ser668 form a helical membrane-spanning segment. The Extracellular portion of the chain corresponds to Ser669–Leu690. The chain crosses the membrane as a helical span at residues Ile691 to Gln710. The Cytoplasmic segment spans residues Ala711–His717. A helical membrane pass occupies residues Lys718 to Leu738. Residues Val739–Phe757 are Extracellular-facing. A helical transmembrane segment spans residues Asp758 to Lys778. At Ser779–Arg912 the chain is on the cytoplasmic side. Residues Phe913–Ile935 traverse the membrane as a helical segment. Topologically, residues Gly936–Phe965 are extracellular. A helical transmembrane segment spans residues Gln966–Ala987. Residues Val988 to Arg1310 lie on the Cytoplasmic side of the membrane. Asp1020 acts as the 4-aspartylphosphate intermediate in catalysis. 2 residues coordinate Mg(2+): Asp1255 and Asp1259. A helical transmembrane segment spans residues Val1311–Ala1328. Residues Gly1329 to Gln1339 are Extracellular-facing. A helical membrane pass occupies residues Pro1340–Leu1357. Over Gln1358–Ile1451 the chain is Cytoplasmic. Ser1384 and Ser1443 each carry phosphoserine.

This sequence belongs to the cation transport ATPase (P-type) (TC 3.A.3) family. Type IB subfamily. As to quaternary structure, monomer. Interacts with COMMD1/MURR1. Interacts with DCTN4, in a copper-dependent manner. Interacts with ATOX1. Interacts (via C-terminus) with ZBTB16/PLZF. In terms of tissue distribution, expressed in brain, liver, kidney, spleen and stomach. In brain, detected in neuronal cells of the hippocampal formation, olfactory bulbs, cerebellum, cerebral cortex and nuclei in the brainstem. Isoform PINA is expressed during night in adult pineal gland (pinealocytes) and retina. Isoform PINA is not detected in other tissue.

It localises to the golgi apparatus. The protein localises to the trans-Golgi network membrane. Its subcellular location is the late endosome. It carries out the reaction Cu(+)(in) + ATP + H2O = Cu(+)(out) + ADP + phosphate + H(+). In terms of biological role, copper ion transmembrane transporter involved in the export of copper out of the cells, such as the efflux of hepatic copper into the bile. The protein is Copper-transporting ATPase 2 (Atp7b) of Rattus norvegicus (Rat).